The chain runs to 454 residues: Maintenance of mitochondrial morphology protein 1 (454 aa).

At 1–117 the chain is on the lumenal side; sequence MESNYTGMDG…SFSSWSFAQG (117 aa). A helical membrane pass occupies residues 118-138; sequence LIVGQVSVVLVLIFFIKFFIF. Over 139 to 454 the chain is Cytoplasmic; that stretch reads SDSSTKTNPN…ESEPGRETHY (316 aa). Residues 144–164 are disordered; that stretch reads KTNPNPAKNSSSTNSLSGLSS. Positions 153–164 are enriched in low complexity; sequence SSSTNSLSGLSS. An SMP-LTD domain is found at 215–427; sequence PAESLDWFNV…EPRFQFIKLP (213 aa). Arginine 253, tryptophan 411, arginine 415, tryptophan 430, arginine 432, and serine 433 together coordinate a 1,2-diacyl-sn-glycero-3-phosphate. Residues 434–454 are disordered; the sequence is KNTREGKADVDESEPGRETHY. The span at 435–454 shows a compositional bias: basic and acidic residues; that stretch reads NTREGKADVDESEPGRETHY.

The protein belongs to the MMM1 family. In terms of assembly, homodimer. Component of the ER-mitochondria encounter structure (ERMES) or MDM complex, composed of MMM1, MDM10, MDM12 and MDM34. An MMM1 homodimer associates with one molecule of MDM12 on each side in a pairwise head-to-tail manner, and the SMP-LTD domains of MMM1 and MDM12 generate a continuous hydrophobic tunnel for phospholipid trafficking.

Its subcellular location is the endoplasmic reticulum membrane. In terms of biological role, component of the ERMES/MDM complex, which serves as a molecular tether to connect the endoplasmic reticulum (ER) and mitochondria. Components of this complex are involved in the control of mitochondrial shape and protein biogenesis, and function in nonvesicular lipid trafficking between the ER and mitochondria. Preferentially binds to glycerophospholipids such as phosphatidylcholoine (PC), phosphatidic acid (PA), phosphatidylglycerol (PG), and phosphatidylserine (PS), but not to phosphatidylethanolamine (PE). The MDM12-MMM1 subcomplex functions in the major beta-barrel assembly pathway that is responsible for biogenesis of all outer membrane beta-barrel proteins, and acts in a late step after the SAM complex. The MDM10-MDM12-MMM1 subcomplex further acts in the TOM40-specific pathway after the action of the MDM12-MMM1 complex. Essential for establishing and maintaining the structure of mitochondria and maintenance of mtDNA nucleoids. The chain is Maintenance of mitochondrial morphology protein 1 from Zygosaccharomyces rouxii (strain ATCC 2623 / CBS 732 / NBRC 1130 / NCYC 568 / NRRL Y-229).